The chain runs to 196 residues: Endoribonuclease YbeY (196 aa).

H120, H124, and H130 together coordinate Zn(2+).

It belongs to the endoribonuclease YbeY family. It depends on Zn(2+) as a cofactor.

Its subcellular location is the cytoplasm. Functionally, single strand-specific metallo-endoribonuclease involved in late-stage 70S ribosome quality control and in maturation of the 3' terminus of the 16S rRNA. The chain is Endoribonuclease YbeY from Corynebacterium diphtheriae (strain ATCC 700971 / NCTC 13129 / Biotype gravis).